The chain runs to 294 residues: Bifunctional protein FolD (294 aa).

NADP(+)-binding positions include 175-177 (GAS) and Ile-241.

It belongs to the tetrahydrofolate dehydrogenase/cyclohydrolase family. In terms of assembly, homodimer.

The enzyme catalyses (6R)-5,10-methylene-5,6,7,8-tetrahydrofolate + NADP(+) = (6R)-5,10-methenyltetrahydrofolate + NADPH. The catalysed reaction is (6R)-5,10-methenyltetrahydrofolate + H2O = (6R)-10-formyltetrahydrofolate + H(+). It functions in the pathway one-carbon metabolism; tetrahydrofolate interconversion. Its function is as follows. Catalyzes the oxidation of 5,10-methylenetetrahydrofolate to 5,10-methenyltetrahydrofolate and then the hydrolysis of 5,10-methenyltetrahydrofolate to 10-formyltetrahydrofolate. This Hahella chejuensis (strain KCTC 2396) protein is Bifunctional protein FolD.